Consider the following 204-residue polypeptide: MDRVILLLSVVSLGVSSQPITDGQRLFSIAVSRVQHLHQVAQRLFFEFESSLQTEEQRQLNKIFLQDYCNSDNIISPIDKHETQRSSILKLLSISYRLVESWEIPSRSLSGGSAPRNLISPKLTQLKAGILLLIEANQDGAELFPDSSALQLAPYGNYYQSLGADESLRRTYELLACFKKDMHKVETYLTVAKCRLSPEANCTL.

A signal peptide spans 1-17; that stretch reads MDRVILLLSVVSLGVSS. Residue Gln18 is modified to Pyrrolidone carboxylic acid. His36 serves as a coordination point for Zn(2+). An intrachain disulfide couples Cys69 to Cys177. Residue Glu186 coordinates Zn(2+). A disulfide bridge connects residues Cys194 and Cys202.

This sequence belongs to the somatotropin/prolactin family.

It localises to the secreted. In terms of biological role, growth hormone plays an important role in growth control and is involved in the regulation of several anabolic processes. Implicated as an osmoregulatory substance important for seawater adaptation. The polypeptide is Somatotropin (gh) (Sebastes schlegelii (Korean rockfish)).